Here is a 206-residue protein sequence, read N- to C-terminus: Small ribosomal subunit protein uS4A (206 aa).

The region spanning 98 to 163 (MRLDNVVYRL…SERFKMFAEN (66 aa)) is the S4 RNA-binding domain.

The protein belongs to the universal ribosomal protein uS4 family. Part of the 30S ribosomal subunit. Contacts protein S5. The interaction surface between S4 and S5 is involved in control of translational fidelity.

In terms of biological role, one of the primary rRNA binding proteins, it binds directly to 16S rRNA where it nucleates assembly of the body of the 30S subunit. With S5 and S12 plays an important role in translational accuracy. This chain is Small ribosomal subunit protein uS4A, found in Clostridium perfringens (strain SM101 / Type A).